The chain runs to 149 residues: Transcriptional repressor NrdR (149 aa).

A zinc finger spans residues 3 to 34 (CPFCDTEETKVIDSRLVSDGYQVRRRRECGHC). The region spanning 49–139 (PKIIKTDGTR…VYLSFDDIDQ (91 aa)) is the ATP-cone domain.

This sequence belongs to the NrdR family. The cofactor is Zn(2+).

Negatively regulates transcription of bacterial ribonucleotide reductase nrd genes and operons by binding to NrdR-boxes. In Haemophilus influenzae (strain 86-028NP), this protein is Transcriptional repressor NrdR.